The primary structure comprises 651 residues: Acetyl-coenzyme A synthetase (651 aa).

CoA-binding positions include 189–192 (RGGK), T311, and N335. ATP-binding positions include 387 to 389 (GEP), 411 to 416 (DTWWQT), D500, and R515. Residue S523 coordinates CoA. R526 lines the ATP pocket. Mg(2+) contacts are provided by V537, H539, and V542. Residue R584 coordinates CoA. Residue K609 is modified to N6-acetyllysine.

Belongs to the ATP-dependent AMP-binding enzyme family. The cofactor is Mg(2+). In terms of processing, acetylated. Deacetylation by the SIR2-homolog deacetylase activates the enzyme.

The enzyme catalyses acetate + ATP + CoA = acetyl-CoA + AMP + diphosphate. Catalyzes the conversion of acetate into acetyl-CoA (AcCoA), an essential intermediate at the junction of anabolic and catabolic pathways. AcsA undergoes a two-step reaction. In the first half reaction, AcsA combines acetate with ATP to form acetyl-adenylate (AcAMP) intermediate. In the second half reaction, it can then transfer the acetyl group from AcAMP to the sulfhydryl group of CoA, forming the product AcCoA. The sequence is that of Acetyl-coenzyme A synthetase from Agrobacterium fabrum (strain C58 / ATCC 33970) (Agrobacterium tumefaciens (strain C58)).